A 104-amino-acid chain; its full sequence is Vesicle-associated membrane protein 3 (104 aa).

Residues 1–23 (MTTNAPAGSSAAAGSSRRLQQTQ) are disordered. At 1 to 81 (MTTNAPAGSS…KRKYWWKNCK (81 aa)) the chain is on the cytoplasmic side. Over residues 7 to 16 (AGSSAAAGSS) the composition is skewed to low complexity. Positions 18 to 78 (RLQQTQNQVD…AKLKRKYWWK (61 aa)) constitute a v-SNARE coiled-coil homology domain. Residues Lys-70, Lys-72, and Lys-81 each participate in a glycyl lysine isopeptide (Lys-Gly) (interchain with G-Cter in ubiquitin) cross-link. Residues 82–102 (MWAIGITVVVIIIIIIVVWSI) form a helical; Anchor for type IV membrane protein membrane-spanning segment. The Vesicular segment spans residues 103-104 (SS).

The protein belongs to the synaptobrevin family. In terms of assembly, interacts with POPDC1 (via the C-terminus cytoplasmic tail). Interacts with BCAP31; involved in VAMP3 export from the endoplasmic reticulum. Interacts with BAIAP3; this interaction is increased in the presence of calcium. Interacts with PICALM. Ubiquitinated by RNF167 at Lys-70, Lys-72 and Lys-81, regulating the recycling endosome pathway.

It is found in the early endosome membrane. The protein resides in the recycling endosome membrane. The protein localises to the synapse. Its subcellular location is the synaptosome. Functionally, SNARE involved in vesicular transport from the late endosomes to the trans-Golgi network. This chain is Vesicle-associated membrane protein 3 (VAMP3), found in Bos taurus (Bovine).